We begin with the raw amino-acid sequence, 201 residues long: Holliday junction resolvase RecU (201 aa).

4 residues coordinate Mg(2+): threonine 87, aspartate 89, glutamate 102, and glutamine 121.

This sequence belongs to the RecU family. Mg(2+) is required as a cofactor.

Its subcellular location is the cytoplasm. The catalysed reaction is Endonucleolytic cleavage at a junction such as a reciprocal single-stranded crossover between two homologous DNA duplexes (Holliday junction).. Endonuclease that resolves Holliday junction intermediates in genetic recombination. Cleaves mobile four-strand junctions by introducing symmetrical nicks in paired strands. Promotes annealing of linear ssDNA with homologous dsDNA. Required for DNA repair, homologous recombination and chromosome segregation. This Listeria welshimeri serovar 6b (strain ATCC 35897 / DSM 20650 / CCUG 15529 / CIP 8149 / NCTC 11857 / SLCC 5334 / V8) protein is Holliday junction resolvase RecU.